Here is a 165-residue protein sequence, read N- to C-terminus: UPF0763 protein NIS_0363 (165 aa).

This sequence belongs to the UPF0763 family.

This chain is UPF0763 protein NIS_0363, found in Nitratiruptor sp. (strain SB155-2).